The following is a 400-amino-acid chain: Probable RNA polymerase sigma factor RfaY (400 aa).

Positions W62–L75 match the Polymerase core binding motif. Positions S165–L184 form a DNA-binding region, H-T-H motif.

Belongs to the sigma-70 factor family. ECF subfamily.

In terms of biological role, sigma factors are initiation factors that promote the attachment of RNA polymerase to specific initiation sites and are then released. This sigma factor is involved in lipopolysaccharide biosynthesis and pathogenicity. The polypeptide is Probable RNA polymerase sigma factor RfaY (rfaY) (Xanthomonas campestris pv. campestris (strain ATCC 33913 / DSM 3586 / NCPPB 528 / LMG 568 / P 25)).